A 130-amino-acid chain; its full sequence is Small ribosomal subunit protein uS9 (130 aa).

It belongs to the universal ribosomal protein uS9 family.

In Paraburkholderia phymatum (strain DSM 17167 / CIP 108236 / LMG 21445 / STM815) (Burkholderia phymatum), this protein is Small ribosomal subunit protein uS9.